The chain runs to 207 residues: Phenazine biosynthesis protein PhzD (207 aa).

Aspartate 38 serves as the catalytic Proton donor. Residues glutamine 78, arginine 87, lysine 122, and tyrosine 151–glycine 155 contribute to the substrate site.

This sequence belongs to the isochorismatase family. As to quaternary structure, homodimer.

The enzyme catalyses (2S)-2-amino-4-deoxychorismate + H2O = (5S,6S)-6-amino-5-hydroxycyclohexa-1,3-diene-1-carboxyate + pyruvate. Its pathway is antibiotic biosynthesis; phenazine biosynthesis. In terms of biological role, involved in the biosynthesis of the antibiotic phenazine, a nitrogen-containing heterocyclic molecule having important roles in virulence, competition and biological control. Catalyzes the hydrolysis of the vinyl ether functional group of 2-amino-2-deoxyisochorismate (ADIC), yielding pyruvate and trans-2,3-dihydro-3-hydroxyanthranilic acid (DHHA). The chain is Phenazine biosynthesis protein PhzD from Pseudomonas fluorescens.